The following is a 383-amino-acid chain: RNA-binding motif, single-stranded-interacting protein 2 (383 aa).

N-acetylmethionine is present on M1. A disordered region spans residues 28–56 (QMAPPSPRNSTPNSSGGGGGGSGGNDQLS). Positions 42 to 51 (SGGGGGGSGG) are enriched in gly residues. RRM domains lie at 58–131 (TNLY…MAKQ) and 137–222 (TNLY…FADG). Position 108 is a phosphoserine (S108). S287 is modified (phosphoserine). The tract at residues 352 to 383 (SSVSAEESNGQQNQLAVEPPSDHGVYPFQFSK) is disordered.

The protein resides in the nucleus. This Mus musculus (Mouse) protein is RNA-binding motif, single-stranded-interacting protein 2 (Rbms2).